Reading from the N-terminus, the 477-residue chain is Putative WAS protein family homolog 4 (477 aa).

The WHD1 stretch occupies residues 1–180; the sequence is MSGVMCLKAS…EGLGGLPSNI (180 aa). Disordered stretches follow at residues 310–420 and 434–477; these read QDGV…QGGH and KGIS…DWES. Residues 315-327 show a composition bias toward pro residues; sequence TPPPPPPPPPPAP. The interval 362–477 is VCA; sequence QGAPREVVDP…QAEDEDDWES (116 aa). The 23-residue stretch at 374–396 folds into the WH2 domain; that stretch reads GWATLLESIRQAGGIGKAKLRSM. A compositionally biased stretch (basic and acidic residues) spans 395–411; sequence SMKERKLEKQQQKEQEQ. Residues 437 to 449 are compositionally biased toward gly residues; the sequence is SGKGPGAGDGPGG.

The protein belongs to the WASH1 family. Interacts (via WHD1 region) with WASHC2C; the interaction is direct.

It localises to the early endosome membrane. Its subcellular location is the recycling endosome membrane. Its function is as follows. May act as a nucleation-promoting factor at the surface of endosomes, where it recruits and activates the Arp2/3 complex to induce actin polymerization, playing a key role in the fission of tubules that serve as transport intermediates during endosome sorting. The protein is Putative WAS protein family homolog 4 (WASH4P) of Homo sapiens (Human).